A 134-amino-acid chain; its full sequence is Small ribosomal subunit protein uS11 (134 aa).

Residues 114 to 134 (TPVPHNGTRPPRKWFKRQEKR) form a disordered region. Residues 123–134 (PPRKWFKRQEKR) are compositionally biased toward basic residues.

It belongs to the universal ribosomal protein uS11 family. As to quaternary structure, part of the 30S ribosomal subunit. Interacts with proteins S7 and S18. Binds to IF-3.

In terms of biological role, located on the platform of the 30S subunit, it bridges several disparate RNA helices of the 16S rRNA. Forms part of the Shine-Dalgarno cleft in the 70S ribosome. This chain is Small ribosomal subunit protein uS11, found in Mesomycoplasma hyopneumoniae (strain J / ATCC 25934 / NCTC 10110) (Mycoplasma hyopneumoniae).